Here is a 456-residue protein sequence, read N- to C-terminus: MSFTIAIIGRPNVGKSTLFNRLVGQKLALVDDMPGVTRDRREGEAKLGDLQFTIIDTAGLDGGPKGSLTARMQEQTETAIALADALFFVIDARAGLTPADRTFADFARRADKPVLLLANKSEGKHGELGAMESYALGLGDPIQISAEHGEGMGELYDALRGLVPETEDEVDEHEETDEERAARPIRVAIVGRPNAGKSTLINHLLGEERLLTSPEAGTTRDSIAVEIEYKGRGFRIFDTAGLRRRSRIEEKLEKLSVADALRAVRFAEVVVLMMDAQNRFEEQDLRIADLIEREGRALVIAVNKWDLMESKPGQISALRHDVDHWLPQVSGVPIVAVSGLMGEGIDRLMQAIVESYAVWNRRVPTAALNRWFEEAIANNPPPAVSGRRLKLNYITQTKARPPSFVLFCSRADAIPQSYLRYLINSMRETFELPGTPVRITLREKANPFAHKRKRPS.

EngA-type G domains lie at 3–167 and 185–360; these read FTIA…PETE and IRVA…AVWN. GTP contacts are provided by residues 9–16, 56–60, 119–122, 191–198, 238–242, and 303–306; these read GRPNVGKS, DTAGL, NKSE, GRPNAGKS, and NKWD. One can recognise a KH-like domain in the interval 361 to 445; sequence RRVPTAALNR…PVRITLREKA (85 aa).

It belongs to the TRAFAC class TrmE-Era-EngA-EngB-Septin-like GTPase superfamily. EngA (Der) GTPase family. Associates with the 50S ribosomal subunit.

GTPase that plays an essential role in the late steps of ribosome biogenesis. The chain is GTPase Der from Bradyrhizobium sp. (strain BTAi1 / ATCC BAA-1182).